The chain runs to 791 residues: RAS guanyl-releasing protein 1 (791 aa).

In terms of domain architecture, N-terminal Ras-GEF spans 49 to 172 (LGKLSKGASL…RLIDTAQINS (124 aa)). The tract at residues 53–106 (SKGASLDDLIQMCIQAFDLDGNMGQNSELLQIMLTMHGFLLPSTELLMKLRTLY) is ras exchanger motif region; required for transforming activity. Residues 201-432 (EPQELAEHLT…YELSYAREPR (232 aa)) enclose the Ras-GEF domain. 2 consecutive EF-hand domains span residues 466–501 (HVQR…FPFS) and 502–528 (FCVM…ASSI). Residues Asp-479, Asp-481, Asp-483, Tyr-485, Glu-490, Asp-506, Asp-508, Glu-510, and Glu-517 each coordinate Ca(2+). The segment at 537-587 (LHNFQETTYLRPTFCDNCAGFLWGVIKQGYRCKDCGMNCHKQCKELVVFEC) adopts a Phorbol-ester/DAG-type zinc-finger fold. Polar residues predominate over residues 683–695 (QVPSPQRSRTPGL). A disordered region spans residues 683–715 (QVPSPQRSRTPGLTSHLPISPMPSPCPSPVPTR). The segment covering 702-712 (SPMPSPCPSPV) has biased composition (pro residues). Positions 728 to 785 (IRKARAELRGGKAGIQELEKEKALLKEENTTLKIQLKDAQRRVETLRAELRKYVLDSD) form a coiled coil.

This sequence belongs to the RASGRP family.

Its subcellular location is the cytoplasm. The protein localises to the cytosol. It is found in the cell membrane. The protein resides in the golgi apparatus membrane. It localises to the endoplasmic reticulum membrane. Regulated by F-actin polymerization and probably by calcium. Its function is as follows. Functions as a diacylglycerol (DAG)-regulated nucleotide exchange factor specifically activating Ras through the exchange of bound GDP for GTP. In Xenopus tropicalis (Western clawed frog), this protein is RAS guanyl-releasing protein 1 (rasgrp1).